A 330-amino-acid polypeptide reads, in one-letter code: Global transcription regulator sge1 (330 aa).

2 disordered regions span residues 93 to 123 and 239 to 306; these read PPGE…RNSV and QYAP…HQPQ. Polar residues predominate over residues 105–114; sequence GKSTTQSGGI. Over residues 250–306 the composition is skewed to low complexity; sequence QQPALQQQPQQQPQPQHQPQLQYQPQPHQHQPQLQYQPQQQHQPQQQYRPQPQHQPQ.

This sequence belongs to the MIT1/WOR1 family.

It localises to the nucleus. Global transcriptional regulator of pathogenicity. Acts as an activator of parasitic growth. Not essential for colonization or penetration of the root surface, but required for expression of genes encoding effectors that are secreted during infection. Involved in conidiogenesis, but is not required for conidial fitness, overall (colony) morphology, vegetative growth or carbon source utilization. In Fusarium oxysporum f. sp. lycopersici (strain 4287 / CBS 123668 / FGSC 9935 / NRRL 34936) (Fusarium vascular wilt of tomato), this protein is Global transcription regulator sge1.